The primary structure comprises 198 residues: NAD(P)H dehydrogenase (quinone) (198 aa).

One can recognise a Flavodoxin-like domain in the interval 4–189; the sequence is ILVLYYSMYG…SIARYQGEYV (186 aa). FMN-binding positions include 10–15 and 78–80; these read SMYGHI and TRF. An NAD(+)-binding site is contributed by Tyr-12. Position 98 (Trp-98) interacts with substrate. Residues 113 to 118 and His-133 contribute to the FMN site; that span reads STGTGG.

Belongs to the WrbA family. FMN is required as a cofactor.

It carries out the reaction a quinone + NADH + H(+) = a quinol + NAD(+). The catalysed reaction is a quinone + NADPH + H(+) = a quinol + NADP(+). This Salmonella paratyphi C (strain RKS4594) protein is NAD(P)H dehydrogenase (quinone).